We begin with the raw amino-acid sequence, 636 residues long: MNSNSTIGRTTLGESDTISLSFSEPSSSLNSRSTDVVFASTSTLVPQQGSLTSLPPVSSTATPTYYSTSLTYDETLHTSIDVSSTSTLVSSTDSSSSSEQDTYSSQYDPATSSYSIITPSMSIFSSTSPMSSSSSITSEWSSLTSTTPTLSSSATSLSSSWSSLSSPSSLLVSSSLSLSLSSSYSDTKLFSFDSRSSIFSPSTPTVISPSYTYLSSISATSFQISTTSELSSSWFSTISSPSTTSNKDTTFPSSSRNTSTSFYSSSLSSTNDFSTISKSSKLSPSASSSTVSISTISVPTSSSVSSSSSKVPSNRPSSSSSSDDTTSAYSSTYTFQSLQSTTSSSIPPTTQTPSTSTISTSPIPTSSQVFNTVAISSSEDSKTIYYFYTQTYDITDSSTTFVTGLPTTIAVAKSEVTSFSAPSSTITADMSFYQHWLDGSLDNNKNQGTSKTNTGTIVGSVVGSVGGILICVLVVWFMLVRKRKAKRHFKENDSFCHEIGRRTGFPTTAQAKEASLQAQDSGSQQRNTETASANNPFSNEFNFKARGNPPPVPPPRNVTAMNGSFQNMRSNFMDQENRFSYGSSFTYSSLGSSTQGGFSTLSSNSIRLGRGLDNDISHDERNTVQNNSQGFLREII.

Residues 1–18 are compositionally biased toward polar residues; the sequence is MNSNSTIGRTTLGESDTI. Disordered stretches follow at residues 1 to 33, 87 to 109, 238 to 271, 299 to 326, and 339 to 362; these read MNSN…NSRS, TLVS…QYDP, ISSP…SSTN, PTSS…DDTT, and QSTT…STSP. A glycan (N-linked (GlcNAc...) asparagine) is linked at Asn-4. Low complexity-rich tracts occupy residues 19 to 33 and 87 to 108; these read SLSF…NSRS and TLVS…SQYD. N-linked (GlcNAc...) asparagine glycosylation is present at Asn-257. A helical transmembrane segment spans residues 457-477; sequence IVGSVVGSVGGILICVLVVWF. Asn-492 is a glycosylation site (N-linked (GlcNAc...) asparagine). Positions 510–541 are enriched in polar residues; it reads QAKEASLQAQDSGSQQRNTETASANNPFSNEF. The segment at 510-551 is disordered; it reads QAKEASLQAQDSGSQQRNTETASANNPFSNEFNFKARGNPPP. Residue Lys-512 forms a Glycyl lysine isopeptide (Lys-Gly) (interchain with G-Cter in ubiquitin) linkage. N-linked (GlcNAc...) asparagine glycosylation is found at Asn-557, Asn-562, and Asn-626. Ser-628 carries the post-translational modification Phosphoserine.

The protein belongs to the TDA7 family.

The protein localises to the vacuole membrane. The polypeptide is Topoisomerase I damage affected protein 7 (TDA7) (Saccharomyces cerevisiae (strain Zymaflore VL3) (Baker's yeast)).